We begin with the raw amino-acid sequence, 493 residues long: Hexokinase-like 1 protein (493 aa).

Residues 38–488 (ASTCPILTKF…SGLGAALLAA (451 aa)) form the Hexokinase domain. A hexokinase small subdomain region spans residues 93–232 (SGNEEGLFYA…GLDMRVSALV (140 aa)). 3 residues coordinate ADP: glycine 107, threonine 108, and asparagine 109. Residues threonine 198, lysine 199, asparagine 233, and aspartate 234 each contribute to the D-glucose site. A hexokinase large subdomain region spans residues 233–477 (NDGVGTLAGA…SHVAIKHTKD (245 aa)). Threonine 257 is an ADP binding site. The D-glucose site is built by asparagine 260, glutamate 287, and glutamate 317. Alanine 442 contributes to the ADP binding site.

The protein belongs to the hexokinase family.

The catalysed reaction is a D-hexose + ATP = a D-hexose 6-phosphate + ADP + H(+). It carries out the reaction D-fructose + ATP = D-fructose 6-phosphate + ADP + H(+). The enzyme catalyses D-glucose + ATP = D-glucose 6-phosphate + ADP + H(+). It functions in the pathway carbohydrate metabolism; hexose metabolism. It participates in carbohydrate degradation; glycolysis; D-glyceraldehyde 3-phosphate and glycerone phosphate from D-glucose: step 1/4. Fructose and glucose phosphorylating enzyme. The sequence is that of Hexokinase-like 1 protein from Arabidopsis thaliana (Mouse-ear cress).